The following is a 651-amino-acid chain: J domain-containing protein required for chloroplast accumulation response 1 (651 aa).

The segment covering 1–17 (MQTLPSSETVLLGSNSA) has biased composition (polar residues). Disordered regions lie at residues 1–56 (MQTL…TRHS), 114–138 (GSRI…QFSL), 156–176 (LNKN…SKAD), 250–291 (KLGK…TDLK), and 308–526 (KPLD…IDEP). Phosphoserine is present on Ser56. Over residues 126 to 137 (SSSGTSSPSQFS) the composition is skewed to low complexity. Basic and acidic residues-rich tracts occupy residues 250-259 (KLGKNEEGDG), 281-291 (TKEEKTETDLK), 337-357 (IFHE…EVRK), 405-416 (VGKDGVKGKVSD), 441-456 (RAKE…DGSN), and 488-497 (QKKDSDRESM). The stretch at 532 to 562 (DVEDITQDENKMEEANKDAEEIKNIDAKIRK) forms a coiled coil. A J domain is found at 586 to 651 (SGWKPVPLMD…WDHFNTLGPV (66 aa)).

In terms of tissue distribution, expressed in leaves and stems, but not in roots.

Its subcellular location is the cytoplasm. Required for chloroplast photorelocation movement; chloroplast accumulation upon low blue light and for chloroplast movement to the bottom of cells in darkness, by modulating chloroplast actin (Cp-actin) filaments distribution, appearance and disappearance. May mediate a slight resistance to aluminum in root hair cells. The polypeptide is J domain-containing protein required for chloroplast accumulation response 1 (JAC1) (Arabidopsis thaliana (Mouse-ear cress)).